The sequence spans 235 residues: Phosphoribosylaminoimidazole-succinocarboxamide synthase (235 aa).

The protein belongs to the SAICAR synthetase family.

The enzyme catalyses 5-amino-1-(5-phospho-D-ribosyl)imidazole-4-carboxylate + L-aspartate + ATP = (2S)-2-[5-amino-1-(5-phospho-beta-D-ribosyl)imidazole-4-carboxamido]succinate + ADP + phosphate + 2 H(+). It functions in the pathway purine metabolism; IMP biosynthesis via de novo pathway; 5-amino-1-(5-phospho-D-ribosyl)imidazole-4-carboxamide from 5-amino-1-(5-phospho-D-ribosyl)imidazole-4-carboxylate: step 1/2. This is Phosphoribosylaminoimidazole-succinocarboxamide synthase from Streptococcus thermophilus (strain ATCC BAA-250 / LMG 18311).